The primary structure comprises 332 residues: Ornithine carbamoyltransferase, catabolic (332 aa).

Residues serine 60–threonine 63, glutamine 87, arginine 111, and histidine 138–glutamine 141 each bind carbamoyl phosphate. L-ornithine is bound by residues asparagine 170, aspartate 230, and serine 234–methionine 235. Carbamoyl phosphate-binding positions include cysteine 271–leucine 272 and arginine 316.

It belongs to the aspartate/ornithine carbamoyltransferase superfamily. OTCase family.

It localises to the cytoplasm. The catalysed reaction is carbamoyl phosphate + L-ornithine = L-citrulline + phosphate + H(+). Its pathway is amino-acid degradation; L-arginine degradation via ADI pathway; carbamoyl phosphate from L-arginine: step 2/2. Functionally, reversibly catalyzes the transfer of the carbamoyl group from carbamoyl phosphate (CP) to the N(epsilon) atom of ornithine (ORN) to produce L-citrulline. This is Ornithine carbamoyltransferase, catabolic (arcB) from Bacillus cereus (strain ATCC 14579 / DSM 31 / CCUG 7414 / JCM 2152 / NBRC 15305 / NCIMB 9373 / NCTC 2599 / NRRL B-3711).